Here is a 601-residue protein sequence, read N- to C-terminus: MEGSDFLLAGVLFLFAAVAAVPLASRLGIGAVLGYLLAGIAIGPWGLGFISDVDEILHFSELGVVFLMFIIGLELNPSKLWQLRRSIFGVGAAQVLLSAALLAGLLMLTHFSWQAAVVGGIGLAMSSTAMALQLMREKGMNRSESGQLGFSVLLFQDLAVIPALALVPLLAGSADEHFDWMKIGMKVLAFVGMLIGGRYLLRPVFRFIAASGVREVFTAATLLLVLGSALFMDALGLSMALGTFIAGVLLAESEYRHELETAIDPFKGLLLGLFFISVGMSLNLGVLYTHLLWVVISVVVLVAVKILVLYLLARLYGVRSSERMQFAGVLSQGGEFAFVLFSTASSQRLFQGDQMALLLVTVTLSMMTTPLLMKLVDKWLSRQFNGPEEEDEKPWVNDDKPQVIVVGFGRFGQVIGRLLMANKMRITVLERDISAVNLMRKYGYKVYYGDATQVDLLRSAGAEAAESIVITCNEPEDTMKLVEICQQHFPHLHILARARGRVEAHELLQAGVTQFSRETFSSALELGRKTLVTLGMHPHQAQRAQLHFRRLDMRMLRELIPMHADTVQISRAREARRELEEIFQREMQQERRQLDGWDEFE.

13 helical membrane passes run 4-24, 29-49, 55-75, 87-107, 115-135, 152-172, 177-197, 207-227, 230-250, 268-288, 291-311, 324-344, and 356-376; these read SDFLLAGVLFLFAAVAAVPLA, IGAVLGYLLAGIAIGPWGLGF, EILHFSELGVVFLMFIIGLEL, IFGVGAAQVLLSAALLAGLLM, AAVVGGIGLAMSSTAMALQLM, VLLFQDLAVIPALALVPLLAG, HFDWMKIGMKVLAFVGMLIGG, FIAASGVREVFTAATLLLVLG, LFMDALGLSMALGTFIAGVLL, GLLLGLFFISVGMSLNLGVLY, LLWVVISVVVLVAVKILVLYL, MQFAGVLSQGGEFAFVLFSTA, and ALLLVTVTLSMMTTPLLMKLV. The RCK N-terminal domain occupies 400–519; it reads KPQVIVVGFG…AGVTQFSRET (120 aa).

The protein belongs to the monovalent cation:proton antiporter 2 (CPA2) transporter (TC 2.A.37) family. KefB subfamily. As to quaternary structure, interacts with the regulatory subunit KefG.

It is found in the cell inner membrane. Functionally, pore-forming subunit of a potassium efflux system that confers protection against electrophiles. Catalyzes K(+)/H(+) antiport. This Escherichia coli O1:K1 / APEC protein is Glutathione-regulated potassium-efflux system protein KefB.